Reading from the N-terminus, the 311-residue chain is Lipoyl synthase (311 aa).

7 residues coordinate [4Fe-4S] cluster: cysteine 47, cysteine 52, cysteine 58, cysteine 73, cysteine 77, cysteine 80, and serine 286. The Radical SAM core domain maps to tryptophan 59–phenylalanine 276.

Belongs to the radical SAM superfamily. Lipoyl synthase family. The cofactor is [4Fe-4S] cluster.

It localises to the cytoplasm. It catalyses the reaction [[Fe-S] cluster scaffold protein carrying a second [4Fe-4S](2+) cluster] + N(6)-octanoyl-L-lysyl-[protein] + 2 oxidized [2Fe-2S]-[ferredoxin] + 2 S-adenosyl-L-methionine + 4 H(+) = [[Fe-S] cluster scaffold protein] + N(6)-[(R)-dihydrolipoyl]-L-lysyl-[protein] + 4 Fe(3+) + 2 hydrogen sulfide + 2 5'-deoxyadenosine + 2 L-methionine + 2 reduced [2Fe-2S]-[ferredoxin]. It participates in protein modification; protein lipoylation via endogenous pathway; protein N(6)-(lipoyl)lysine from octanoyl-[acyl-carrier-protein]: step 2/2. In terms of biological role, catalyzes the radical-mediated insertion of two sulfur atoms into the C-6 and C-8 positions of the octanoyl moiety bound to the lipoyl domains of lipoate-dependent enzymes, thereby converting the octanoylated domains into lipoylated derivatives. This chain is Lipoyl synthase, found in Chlamydia trachomatis serovar L2 (strain ATCC VR-902B / DSM 19102 / 434/Bu).